The sequence spans 220 residues: Iron-sulfur flavoprotein AF_1436 (220 aa).

[4Fe-4S] cluster contacts are provided by Cys47, Cys50, Cys53, and Cys59.

The protein belongs to the SsuE family. Isf subfamily. As to quaternary structure, homodimer. Requires FMN as cofactor. [4Fe-4S] cluster is required as a cofactor.

Its function is as follows. Redox-active protein probably involved in electron transport. This is Iron-sulfur flavoprotein AF_1436 from Archaeoglobus fulgidus (strain ATCC 49558 / DSM 4304 / JCM 9628 / NBRC 100126 / VC-16).